A 275-amino-acid polypeptide reads, in one-letter code: 3-methyl-2-oxobutanoate hydroxymethyltransferase (275 aa).

The Mg(2+) site is built by Asp-49 and Asp-88. 3-methyl-2-oxobutanoate contacts are provided by residues Asp-49–Ser-50, Asp-88, and Lys-118. Position 120 (Glu-120) interacts with Mg(2+). Glu-187 (proton acceptor) is an active-site residue.

This sequence belongs to the PanB family. In terms of assembly, homodecamer; pentamer of dimers. Requires Mg(2+) as cofactor.

Its subcellular location is the cytoplasm. It catalyses the reaction 3-methyl-2-oxobutanoate + (6R)-5,10-methylene-5,6,7,8-tetrahydrofolate + H2O = 2-dehydropantoate + (6S)-5,6,7,8-tetrahydrofolate. It functions in the pathway cofactor biosynthesis; (R)-pantothenate biosynthesis; (R)-pantoate from 3-methyl-2-oxobutanoate: step 1/2. In terms of biological role, catalyzes the reversible reaction in which hydroxymethyl group from 5,10-methylenetetrahydrofolate is transferred onto alpha-ketoisovalerate to form ketopantoate. In Bartonella quintana (strain Toulouse) (Rochalimaea quintana), this protein is 3-methyl-2-oxobutanoate hydroxymethyltransferase.